A 431-amino-acid chain; its full sequence is 23S rRNA (uracil(1939)-C(5))-methyltransferase RlmD (431 aa).

Residues 10–68 enclose the TRAM domain; that stretch reads RVTTRQIITVKVNDLDSFGQGVARHNGKALFIPGLLPEESAEVIITEDKKQFARARVSR. Residues cysteine 81, cysteine 87, cysteine 90, and cysteine 161 each contribute to the [4Fe-4S] cluster site. S-adenosyl-L-methionine is bound by residues glutamine 264, phenylalanine 293, asparagine 298, glutamate 314, asparagine 341, and aspartate 362. The Nucleophile role is filled by cysteine 388.

The protein belongs to the class I-like SAM-binding methyltransferase superfamily. RNA M5U methyltransferase family. RlmD subfamily.

The enzyme catalyses uridine(1939) in 23S rRNA + S-adenosyl-L-methionine = 5-methyluridine(1939) in 23S rRNA + S-adenosyl-L-homocysteine + H(+). Functionally, catalyzes the formation of 5-methyl-uridine at position 1939 (m5U1939) in 23S rRNA. The protein is 23S rRNA (uracil(1939)-C(5))-methyltransferase RlmD of Salmonella typhimurium (strain LT2 / SGSC1412 / ATCC 700720).